Reading from the N-terminus, the 182-residue chain is Adenylate kinase (182 aa).

12 to 17 (GAGKGT) serves as a coordination point for ATP. Residues 32–61 (STGDLLRDEVSSGSVLGIKAAEIMNKGELV) are NMP. Residues Thr33, Arg38, 59-61 (ELV), 85-88 (GFPR), and Gln92 each bind AMP. An LID region spans residues 126 to 132 (ERGRQDD). ATP is bound at residue Arg127. AMP-binding residues include Arg129 and Arg140. Ala168 is an ATP binding site.

This sequence belongs to the adenylate kinase family. As to quaternary structure, monomer.

The protein resides in the cytoplasm. The enzyme catalyses AMP + ATP = 2 ADP. It functions in the pathway purine metabolism; AMP biosynthesis via salvage pathway; AMP from ADP: step 1/1. Catalyzes the reversible transfer of the terminal phosphate group between ATP and AMP. Plays an important role in cellular energy homeostasis and in adenine nucleotide metabolism. This chain is Adenylate kinase, found in Prochlorococcus marinus (strain NATL1A).